A 201-amino-acid chain; its full sequence is Casparian strip membrane protein 4 (201 aa).

The segment at Met-1–Ala-23 is disordered. Residues Met-1–Ser-41 lie on the Cytoplasmic side of the membrane. A helical transmembrane segment spans residues Val-42–Met-62. The Extracellular portion of the chain corresponds to Gly-63–Thr-87. N-linked (GlcNAc...) asparagine glycosylation is present at Asn-66. The helical transmembrane segment at Leu-88–Leu-108 threads the bilayer. The Cytoplasmic segment spans residues Ser-109 to Arg-122. Residues Leu-123 to Ser-143 form a helical membrane-spanning segment. Residues Ala-144–Arg-172 lie on the Extracellular side of the membrane. A helical membrane pass occupies residues Ile-173–Leu-193. Over Ser-194–Arg-201 the chain is Cytoplasmic.

It belongs to the Casparian strip membrane proteins (CASP) family. As to quaternary structure, homodimer and heterodimers.

It is found in the cell membrane. In terms of biological role, regulates membrane-cell wall junctions and localized cell wall deposition. Required for establishment of the Casparian strip membrane domain (CSD) and the subsequent formation of Casparian strips, a cell wall modification of the root endodermis that determines an apoplastic barrier between the intraorganismal apoplasm and the extraorganismal apoplasm and prevents lateral diffusion. This Oryza sativa subsp. japonica (Rice) protein is Casparian strip membrane protein 4.